The sequence spans 460 residues: Benzyl alcohol O-benzoyltransferase (460 aa).

Catalysis depends on proton acceptor residues His-167 and Asp-382.

It belongs to the plant acyltransferase family. Specifically expressed in flowers, mainly in the limb of flowers corollas, and, at low levels, in roots, stems, sepals and leaves.

It carries out the reaction benzyl alcohol + benzoyl-CoA = benzyl benzoate + CoA. The catalysed reaction is benzyl alcohol + acetyl-CoA = benzyl acetate + CoA. The enzyme catalyses 3-hydroxybenzyl alcohol + acetyl-CoA = 3-hydroxy-benzyl acetate + CoA. It catalyses the reaction 3-hydroxybenzyl alcohol + benzoyl-CoA = 3-hydroxy-benzyl benzoate + CoA. It carries out the reaction 2-phenylethanol + benzoyl-CoA = phenethyl benzoate + CoA. The catalysed reaction is (3Z)-hex-3-en-1-ol + benzoyl-CoA = (3Z)-hex-3-en-1-yl benzoate + CoA. The enzyme catalyses (2E)-geraniol + acetyl-CoA = (2E)-geranyl acetate + CoA. It catalyses the reaction butan-1-ol + benzoyl-CoA = butyl benzoate + CoA. It carries out the reaction (2E)-geraniol + benzoyl-CoA = (2E)-geranyl benzoate + CoA. The catalysed reaction is octan-1-ol + benzoyl-CoA = octyl benzoate + CoA. Its pathway is aromatic compound metabolism; benzoyl-CoA degradation. Involved in the production of volatile organic compounds (VOCs), including floral volatile benzenoids and phenylpropanoids (FVBP), in flowers of fragrant cultivars (e.g. cv. Mitchell and cv. V26), scent attracting pollinators (e.g. the night-active hawkmoth pollinator Manduca sexta). Acyltransferase that catalyzes the transfer of benzoyl and acetyl moieties to a large variety of potential substrate alcohols, and involved in the formation of volatile esters benzyl benzoate and phenylethyl benzoate from benzoyl-CoA. With acetyl-CoA, mainly active on benzyl alcohol, and, to a lower extent, on 3-hydroxybenzyl alcohol, geraniol, and 2-phenylethanol, but barely active on butanol, 1-octanol, 4-hydroxy-benzyl alcohol, 2-hexanol, cis-3-hexen-1-ol and linalool. With benzoyl-CoA, mainly active on benzyl alcohol, but also efficient on several substrates, including 3-hydroxybenzyl alcohol, 2-phenylethanol, geraniol, butanol, cis-3-hexen-1-ol and 1-octanol. This chain is Benzyl alcohol O-benzoyltransferase, found in Petunia hybrida (Petunia).